The primary structure comprises 467 residues: Venom serine carboxypeptidase (467 aa).

The signal sequence occupies residues 1 to 18; the sequence is MKKLVLLQFLFFISFARG. 2 N-linked (GlcNAc...) asparagine glycosylation sites follow: Asn130 and Asn169. Residue Ser202 is part of the active site. Residues Asn304, Asn322, and Asn344 are each glycosylated (N-linked (GlcNAc...) asparagine). Residues Asp387 and His444 contribute to the active site.

Belongs to the peptidase S10 family. In terms of tissue distribution, expressed by the venom duct.

Its subcellular location is the secreted. It carries out the reaction Release of a C-terminal amino acid with broad specificity.. This chain is Venom serine carboxypeptidase, found in Apis mellifera (Honeybee).